A 124-amino-acid polypeptide reads, in one-letter code: Large ribosomal subunit protein uL22 (124 aa).

The protein belongs to the universal ribosomal protein uL22 family. In terms of assembly, part of the 50S ribosomal subunit.

Its function is as follows. This protein binds specifically to 23S rRNA; its binding is stimulated by other ribosomal proteins, e.g. L4, L17, and L20. It is important during the early stages of 50S assembly. It makes multiple contacts with different domains of the 23S rRNA in the assembled 50S subunit and ribosome. Functionally, the globular domain of the protein is located near the polypeptide exit tunnel on the outside of the subunit, while an extended beta-hairpin is found that lines the wall of the exit tunnel in the center of the 70S ribosome. In Macrococcus caseolyticus (strain JCSC5402) (Macrococcoides caseolyticum), this protein is Large ribosomal subunit protein uL22.